Reading from the N-terminus, the 2282-residue chain is Cation channel sperm-associated targeting subunit tau (2282 aa).

The disordered stretch occupies residues 1–118; that stretch reads MELPPPGNRR…RGKGKGTGTR (118 aa). Composition is skewed to polar residues over residues 11–41 and 50–87; these read VSINNPQETSGRVPTTSAGFPTQSSKISLKR and MMSNRSSGGQSLLPSSILQKTSLNPPGSLQSKPSNLSS. A compositionally biased stretch (basic and acidic residues) spans 90–109; that stretch reads YADEEGKPLTDKNKDKDKGR. Residues 131–266 enclose the C2 domain; that stretch reads QSDEMAIANQ…IQKGCFTEVM (136 aa). 10 disordered regions span residues 397-416, 656-679, 747-1066, 1104-1153, 1217-1240, 1426-1445, 1452-1515, 1542-1569, 1908-1928, and 2187-2222; these read MTKRDNKGSSIPSESNSSAL, EHEDQDPPYPGHSGSAGSDATWAE, NKLI…SHDP, SAKS…DKQS, YTNDEGYSPPPSVHSRPSDSTDDR, NSLLDSQTTSSTEQYSDSRS, RQNT…SLDK, ERRQQPEKDSESLIKHSSSSGSEHLEKT, NQANPLTRSPERPSDISLKKQ, and PKKSKSGARLLGKSPEDSHNQAKHCARPYTAPEPNK. Polar residues-rich tracts occupy residues 750–760, 783–792, 800–841, 849–858, and 953–974; these read ITDSSFNTTKP, SDPSSNTTKP, DPSS…SDLN, IVSTISSDPN, and SARSSDPNKLSRDPSINSTKLS. A compositionally biased stretch (low complexity) spans 1104-1123; it reads SAKSLDSNNSSASSSPTVNS. Polar residues predominate over residues 1124–1136; the sequence is DTTTNAAEPSGTK. Polar residues-rich tracts occupy residues 1452–1466 and 1473–1482; these read RQNTSSINPLDSSVS and DCQSISTQES. Over residues 1484–1493 the composition is skewed to basic and acidic residues; that stretch reads YPVRDTKSDS. Over residues 1495–1504 the composition is skewed to acidic residues; sequence NDTEEMELDS. Composition is skewed to basic and acidic residues over residues 1542-1555 and 1916-1925; these read ERRQQPEKDSESLI and SPERPSDISL.

Component of the CatSper complex or CatSpermasome composed of the core pore-forming members CATSPER1, CATSPER2, CATSPER3 and CATSPER4 as well as auxiliary members CATSPERB, CATSPERG, CATSPERD, CATSPERE, CATSPERZ, C2CD6/CATSPERT, SLCO6C1, TMEM249, TMEM262 and EFCAB9. HSPA1 may be an additional auxiliary complex member. The core complex members CATSPER1, CATSPER2, CATSPER3 and CATSPER4 form a heterotetrameric channel. The auxiliary CATSPERB, CATSPERG, CATSPERD and CATSPERE subunits form a pavilion-like structure over the pore which stabilizes the complex through interactions with CATSPER4, CATSPER3, CATSPER1 and CATSPER2 respectively. SLCO6C1 interacts with CATSPERE and TMEM262/CATSPERH interacts with CATSPERB, further stabilizing the complex. C2CD6/CATSPERT interacts at least with CATSPERD and is required for targeting the CatSper complex in the flagellar membrane. As to expression, expressed in cauda sperm (at protein level).

Its subcellular location is the cell projection. It is found in the cilium. The protein localises to the flagellum membrane. Its function is as follows. Auxiliary component of the CatSper complex, a complex involved in sperm cell hyperactivation. Sperm cell hyperactivation is needed for sperm motility which is essential late in the preparation of sperm for fertilization. Required for CatSper complex targeting and trafficking into the quadrilinear nanodomains. Targets the preassembled CatSper complexes to elongating flagella, where it links the channel-carrying vesicles and motor proteins. The protein is Cation channel sperm-associated targeting subunit tau of Mus musculus (Mouse).